A 1626-amino-acid chain; its full sequence is DNA topoisomerase 2-beta (1626 aa).

A2 is modified (N-acetylalanine). K3 is modified (N6-acetyllysine). Residues Q28, N29, K33, and K34 each participate in a glycyl lysine isopeptide (Lys-Gly) (interchain with G-Cter in SUMO2) cross-link. ATP is bound by residues N112, N141, and 169–171; that span reads SSN. Residues K177 and K178 each participate in a glycyl lysine isopeptide (Lys-Gly) (interchain with G-Cter in SUMO2) cross-link. 182–189 contributes to the ATP binding site; the sequence is GRNGYGAK. Residues K228 and K299 each participate in a glycyl lysine isopeptide (Lys-Gly) (interchain with G-Cter in SUMO2) cross-link. The interval 363–365 is interaction with DNA; the sequence is KKK. Glycyl lysine isopeptide (Lys-Gly) (interchain with G-Cter in SUMO2) cross-links involve residues K367 and K373. An ATP-binding site is contributed by 397–399; that stretch reads QTK. Residues K437, K439, and K446 each participate in a glycyl lysine isopeptide (Lys-Gly) (interchain with G-Cter in SUMO2) cross-link. In terms of domain architecture, Toprim spans 476–593; that stretch reads CTLILTEGDS…SLLKHGFLEE (118 aa). 3 residues coordinate Mg(2+): E482, D562, and D564. Glycyl lysine isopeptide (Lys-Gly) (interchain with G-Cter in SUMO2) cross-links involve residues K600, K605, K635, K643, K646, K676, and K712. In terms of domain architecture, Topo IIA-type catalytic spans 736–1189; that stretch reads IPSLVDGFKP…SPSDLWKEDL (454 aa). Y826 (O-(5'-phospho-DNA)-tyrosine intermediate) is an active-site residue. Positions 1011–1020 are interaction with DNA; it reads KLQTTLTCNS. The Nuclear export signal motif lies at 1034 to 1044; that stretch reads ETVQDILKEFF. K1092 is covalently cross-linked (Glycyl lysine isopeptide (Lys-Gly) (interchain with G-Cter in SUMO2)). The tract at residues 1110–1140 is disordered; that stretch reads AWKEAQEKAAEEDETQNQHDDSSSDSGTPSG. Residues K1214, K1217, K1226, and K1227 each participate in a glycyl lysine isopeptide (Lys-Gly) (interchain with G-Cter in SUMO2) cross-link. At S1236 the chain carries Phosphoserine. Glycyl lysine isopeptide (Lys-Gly) (interchain with G-Cter in SUMO2) cross-links involve residues K1250, K1262, and K1271. Residues 1274-1604 form a disordered region; that stretch reads FDEEFSGAPV…PSLPRTGRAR (331 aa). The residue at position 1292 (T1292) is a Phosphothreonine. Residues K1323 and K1327 each participate in a glycyl lysine isopeptide (Lys-Gly) (interchain with G-Cter in SUMO2) cross-link. Composition is skewed to basic and acidic residues over residues 1334–1344 and 1358–1370; these read PWSDDESKSES and SLLR…RPKY. 5 positions are modified to phosphoserine: S1336, S1340, S1342, S1344, and S1358. A Phosphotyrosine modification is found at Y1370. Residues 1374–1392 are compositionally biased toward acidic residues; it reads FSEEEDDDADDDDDDNNDL. Phosphoserine is present on S1375. A Glycyl lysine isopeptide (Lys-Gly) (interchain with G-Cter in SUMO2) cross-link involves residue K1398. S1400 carries the phosphoserine modification. Residue T1403 is modified to Phosphothreonine. Phosphoserine is present on S1413. Y1421 is subject to Phosphotyrosine. At S1424 the chain carries Phosphoserine. Over residues 1430–1442 the composition is skewed to basic and acidic residues; sequence ATPEKSLHDKKSQ. K1440 is covalently cross-linked (Glycyl lysine isopeptide (Lys-Gly) (interchain with G-Cter in SUMO2)). S1441, S1452, and S1454 each carry phosphoserine. A Glycyl lysine isopeptide (Lys-Gly) (interchain with G-Cter in SUMO2) cross-link involves residue K1456. Positions 1456 to 1466 are enriched in basic and acidic residues; it reads KSEDDSAKFDS. A phosphoserine mark is found at S1461, S1466, S1473, and S1476. A Glycyl lysine isopeptide (Lys-Gly) (interchain with G-Cter in SUMO2) cross-link involves residue K1490. The interval 1506-1512 is interaction with PLSCR1; the sequence is KPKRAPK. 3 positions are modified to phosphoserine: S1522, S1524, and S1526. Residues 1539–1549 show a composition bias toward basic residues; the sequence is GKGRGAKKRKA. A phosphoserine mark is found at S1550 and S1552. The span at 1563–1574 shows a compositional bias: basic residues; that stretch reads KTSKTTSKKPKK. Position 1575 is a phosphothreonine (T1575). Phosphoserine occurs at positions 1576 and 1581. Residue T1592 is modified to Phosphothreonine. S1596 carries the post-translational modification Phosphoserine. Phosphotyrosine is present on Y1609. S1613 carries the phosphoserine modification.

It belongs to the type II topoisomerase family. In terms of assembly, homodimer. Interacts with KIAA1210. Interacts with PLSCR1. The cofactor is Mg(2+). Mn(2+) serves as cofactor. It depends on Ca(2+) as a cofactor. (Microbial infection) Deubiquitinated by Epstein-Barr virus BPLF1; leading to stabilized SUMOylated TOP2A trapped in cleavage complexes, which halts the DNA damage response to TOP2A-induced double-strand DNA breaks. Post-translationally, SUMOylated. Expressed in the tonsil, spleen, lymph node, thymus, skin, pancreas, testis, colon, kidney, liver, brain and lung. Also found in breast, colon and lung carcinomas, Hodgkin's disease, large-cell non-Hodgkin's lymphoma, lymphocytic lymphomas and seminomas.

It is found in the nucleus. It localises to the nucleolus. The protein resides in the nucleoplasm. It carries out the reaction ATP-dependent breakage, passage and rejoining of double-stranded DNA.. In terms of biological role, key decatenating enzyme that alters DNA topology by binding to two double-stranded DNA molecules, generating a double-stranded break in one of the strands, passing the intact strand through the broken strand, and religating the broken strand. Plays a role in B-cell differentiation. The protein is DNA topoisomerase 2-beta (TOP2B) of Homo sapiens (Human).